Reading from the N-terminus, the 184-residue chain is Photosystem I assembly protein Ycf3 (184 aa).

TPR repeat units lie at residues 31 to 64 (AFAY…DEDQ), 68 to 101 (SYTL…NSNL), and 131 to 164 (MEIS…APDN).

Belongs to the Ycf3 family.

The protein localises to the plastid. The protein resides in the chloroplast thylakoid membrane. Essential for the assembly of the photosystem I (PSI) complex. May act as a chaperone-like factor to guide the assembly of the PSI subunits. The chain is Photosystem I assembly protein Ycf3 from Thalassiosira pseudonana (Marine diatom).